A 423-amino-acid polypeptide reads, in one-letter code: Glycine amidinotransferase, mitochondrial (423 aa).

The transit peptide at 1–43 (MLRVRCLRGGSRGAEALHYIGSRLGRTVTGWVQRTFQSTQAAT) directs the protein to the mitochondrion. Residues serine 46 and serine 49 each carry the phosphoserine modification. Aspartate 170 is a binding site for arginine. Catalysis depends on residues aspartate 254 and histidine 303. Arginine is bound by residues aspartate 305, arginine 322, serine 354, and serine 355. N6-acetyllysine is present on lysine 385. The Amidino-cysteine intermediate role is filled by cysteine 407.

It belongs to the amidinotransferase family. As to quaternary structure, homodimer.

It is found in the mitochondrion inner membrane. It carries out the reaction L-arginine + glycine = guanidinoacetate + L-ornithine. It catalyses the reaction 4-aminobutanoate + L-arginine = 4-guanidinobutanoate + L-ornithine. The enzyme catalyses beta-alanine + L-arginine = 3-guanidinopropanoate + L-ornithine. The catalysed reaction is taurine + L-arginine = taurocyamine + L-ornithine. It functions in the pathway amine and polyamine biosynthesis; creatine biosynthesis; creatine from L-arginine and glycine: step 1/2. Its function is as follows. Transamidinase that catalyzes the transfer of the amidino group of L-arginine onto the amino moiety of acceptor metabolites such as glycine, beta-alanine, gamma-aminobutyric acid (GABA) and taurine yielding the corresponding guanidine derivatives. Catalyzes the rate-limiting step of creatine biosynthesis, namely the transfer of the amidino group from L-arginine to glycine to generate guanidinoacetate, which is then methylated by GAMT to form creatine. Provides creatine as a source for ATP generation in tissues with high energy demands, in particular skeletal muscle, heart and brain. In Bos taurus (Bovine), this protein is Glycine amidinotransferase, mitochondrial (GATM).